Here is a 583-residue protein sequence, read N- to C-terminus: Torsin-1A-interacting protein 1 (583 aa).

Residues 1–12 (MAGDGRRAEAVR) show a composition bias toward basic and acidic residues. 2 disordered regions span residues 1–254 (MAGD…RSSS) and 271–293 (AHDK…WAPQ). The Nuclear segment spans residues 1–338 (MAGDGRRAEA…NASFVKRNRW (338 aa)). A Phosphoserine modification is found at serine 60. Basic and acidic residues-rich tracts occupy residues 74–101 (VAKE…EVRE) and 115–124 (RPQETEEMKT). Phosphoserine occurs at positions 135 and 143. Methionine 146 is subject to Methionine sulfoxide. A phosphoserine mark is found at serine 154, serine 156, and serine 157. Positions 165 to 174 (QTDLSQTISK) are enriched in polar residues. A phosphoserine mark is found at serine 186 and serine 215. Residues 216–225 (EEGETEEDDQ) show a composition bias toward acidic residues. A Phosphothreonine modification is found at threonine 220. A phosphoserine mark is found at serine 227, serine 230, and serine 242. Residues 238-250 (RSRDSDESGDKTT) are compositionally biased toward basic and acidic residues. The segment covering 277-287 (SVLSSGYQKTP) has biased composition (polar residues). Position 301 is a methionine sulfoxide (methionine 301). Serine 305 carries the post-translational modification Phosphoserine. Residue lysine 308 forms a Glycyl lysine isopeptide (Lys-Gly) (interchain with G-Cter in SUMO2) linkage. Serine 309 and serine 315 each carry phosphoserine. Positions 309-328 (SELGNQSPSTSSRQVTGQPQ) are disordered. A helical transmembrane segment spans residues 339-355 (WLLPLIAALASGSFWFF). The Perinuclear space portion of the chain corresponds to 356–583 (STPEVETTAV…ENALKRGICL (228 aa)). The interval 356–583 (STPEVETTAV…ENALKRGICL (228 aa)) is interaction with TOR1A. Positions 359–435 (EVETTAVQEF…SEQIADAYSS (77 aa)) form a coiled coil. A glycan (N-linked (GlcNAc...) asparagine) is linked at asparagine 399. Position 552 is a methionine sulfoxide (methionine 552).

This sequence belongs to the TOR1AIP family. Interacts with ATP1B4. Interacts with TOR1A (ATP-bound). Interacts with TOR1B, TOR2A and TOR3A. Interacts with VIM. Post-translationally, phosphorylated. Dephosphorylated at Ser-309 and Ser-315 by serine/threonine-protein phosphatase PP1. Expressed in muscle, liver and kidney. As to expression, major isoform present in liver, brain and heart (at protein level). Expressed at lower levels than isoform 4 in lung, kidney and spleen (at protein level). Similar levels of isoforms 1 and 4 are observed in ovary, testis and pancreas (at protein level). In terms of tissue distribution, expressed at higher levels than isoform 1 in lung, kidney and spleen (at protein level). Expressed at lower levels than isoform 1 in liver, brain and heart (at protein level). Similar levels of isoforms 1 and 4 are observed in ovary, testis and pancreas (at protein level).

The protein localises to the nucleus inner membrane. The protein resides in the nucleus envelope. It is found in the nucleus. Its function is as follows. Required for nuclear membrane integrity. Induces TOR1A and TOR1B ATPase activity and is required for their location on the nuclear membrane. Binds to A- and B-type lamins. Possible role in membrane attachment and assembly of the nuclear lamina. This Homo sapiens (Human) protein is Torsin-1A-interacting protein 1 (TOR1AIP1).